Reading from the N-terminus, the 290-residue chain is DegV domain-containing protein MG450 (290 aa).

In terms of domain architecture, DegV spans 3–289 (IAFLVDSVSN…INSYAFLIQT (287 aa)). Hexadecanoate contacts are provided by T65 and S97.

May bind long-chain fatty acids, such as palmitate, and may play a role in lipid transport or fatty acid metabolism. This Mycoplasma genitalium (strain ATCC 33530 / DSM 19775 / NCTC 10195 / G37) (Mycoplasmoides genitalium) protein is DegV domain-containing protein MG450.